A 931-amino-acid polypeptide reads, in one-letter code: Protein unc-45 homolog B (931 aa).

3 TPR repeats span residues 6–39 (AAQLKEEGNRHFQLQDYKAATKSYSQALKLTKDK), 43–76 (ATLYRNRAACGLKMESYAQAASDASRAIDINSAD), and 77–110 (IKALYRRCQALEHLGKLDQAFKDVQRCATLEPRN). ARM repeat units lie at residues 169-208 (EAGAERIFQSNGVALLLQLMNTQRPELLLAAVRTLSGMCS), 211-250 (RARATAILHAVRIDRICSLMALENEEMSLAVCNLLQAIID), and 751-790 (DKLRQKIFKEKALPDIENYMFENHDQLRQAATECMCNMVL).

Interacts with HSP90 in an ATP-independent manner. Interacts with UBE4B; the interaction may target UNC45B for proteasomal degradation. In terms of tissue distribution, highly expressed in adult skeletal muscle and heart. Detected at intermediate levels in lung. Highly expressed in embryonic heart.

The protein localises to the cytoplasm. Its subcellular location is the myofibril. It is found in the sarcomere. The protein resides in the z line. It localises to the a band. The protein localises to the perinuclear region. Its subcellular location is the cytosol. Acts as a co-chaperone for HSP90 and is required for proper folding of the myosin motor domain. Plays a role in sarcomere formation during muscle cell development. Is necessary for normal early lens development. This Mus musculus (Mouse) protein is Protein unc-45 homolog B (Unc45b).